The following is a 221-amino-acid chain: Cytidylate kinase (221 aa).

Residue 11 to 19 (GPCGAGKST) participates in ATP binding.

Belongs to the cytidylate kinase family. Type 1 subfamily.

The protein localises to the cytoplasm. It carries out the reaction CMP + ATP = CDP + ADP. The catalysed reaction is dCMP + ATP = dCDP + ADP. The sequence is that of Cytidylate kinase from Mycoplasmopsis agalactiae (strain NCTC 10123 / CIP 59.7 / PG2) (Mycoplasma agalactiae).